Consider the following 86-residue polypeptide: Large ribosomal subunit protein bL27 (86 aa).

This sequence belongs to the bacterial ribosomal protein bL27 family.

This chain is Large ribosomal subunit protein bL27, found in Flavobacterium johnsoniae (strain ATCC 17061 / DSM 2064 / JCM 8514 / BCRC 14874 / CCUG 350202 / NBRC 14942 / NCIMB 11054 / UW101) (Cytophaga johnsonae).